The primary structure comprises 204 residues: FMN-dependent NADH:quinone oxidoreductase (204 aa).

Residues serine 10, 16 to 18 (SIS), and 96 to 99 (MYNF) contribute to the FMN site.

Belongs to the azoreductase type 1 family. Homodimer. Requires FMN as cofactor.

The enzyme catalyses 2 a quinone + NADH + H(+) = 2 a 1,4-benzosemiquinone + NAD(+). It catalyses the reaction N,N-dimethyl-1,4-phenylenediamine + anthranilate + 2 NAD(+) = 2-(4-dimethylaminophenyl)diazenylbenzoate + 2 NADH + 2 H(+). Its function is as follows. Quinone reductase that provides resistance to thiol-specific stress caused by electrophilic quinones. In terms of biological role, also exhibits azoreductase activity. Catalyzes the reductive cleavage of the azo bond in aromatic azo compounds to the corresponding amines. This Herminiimonas arsenicoxydans protein is FMN-dependent NADH:quinone oxidoreductase.